The chain runs to 183 residues: uncharacterized protein (183 aa).

The protein belongs to the asfivirus S183L family.

This is an uncharacterized protein from African swine fever virus (isolate Pig/Kenya/KEN-50/1950) (ASFV).